The following is a 260-amino-acid chain: UPF0246 protein BTH_I1090 (260 aa).

This sequence belongs to the UPF0246 family.

The protein is UPF0246 protein BTH_I1090 of Burkholderia thailandensis (strain ATCC 700388 / DSM 13276 / CCUG 48851 / CIP 106301 / E264).